A 206-amino-acid polypeptide reads, in one-letter code: Large ribosomal subunit protein uL4 (206 aa).

The segment covering 42–54 has biased composition (polar residues); that stretch reads RRQQGTHQSQGRS. The disordered stretch occupies residues 42 to 93; sequence RRQQGTHQSQGRSDVSRTGAKMFKQKGTGRARHSSARAPQFRGGGKAHGPVV. Residues 64–76 are compositionally biased toward basic residues; that stretch reads FKQKGTGRARHSS.

The protein belongs to the universal ribosomal protein uL4 family. In terms of assembly, part of the 50S ribosomal subunit.

Its function is as follows. One of the primary rRNA binding proteins, this protein initially binds near the 5'-end of the 23S rRNA. It is important during the early stages of 50S assembly. It makes multiple contacts with different domains of the 23S rRNA in the assembled 50S subunit and ribosome. Functionally, forms part of the polypeptide exit tunnel. The polypeptide is Large ribosomal subunit protein uL4 (Bartonella henselae (strain ATCC 49882 / DSM 28221 / CCUG 30454 / Houston 1) (Rochalimaea henselae)).